The sequence spans 503 residues: Anthranilate synthase component 1 3 (503 aa).

269–271 (PYS) contributes to the L-tryptophan binding site. 304–305 (GT) serves as a coordination point for chorismate. Glu-331 serves as a coordination point for Mg(2+). Chorismate-binding positions include Tyr-419, Arg-439, 453–455 (GSG), and Gly-455. A Mg(2+)-binding site is contributed by Glu-468.

This sequence belongs to the anthranilate synthase component I family. As to quaternary structure, tetramer of two components I and two components II. Mg(2+) serves as cofactor.

It catalyses the reaction chorismate + L-glutamine = anthranilate + pyruvate + L-glutamate + H(+). Its pathway is amino-acid biosynthesis; L-tryptophan biosynthesis; L-tryptophan from chorismate: step 1/5. In Haloarcula marismortui (strain ATCC 43049 / DSM 3752 / JCM 8966 / VKM B-1809) (Halobacterium marismortui), this protein is Anthranilate synthase component 1 3 (trpE3).